Here is a 222-residue protein sequence, read N- to C-terminus: 2-C-methyl-D-erythritol 4-phosphate cytidylyltransferase (222 aa).

Belongs to the IspD/TarI cytidylyltransferase family. IspD subfamily.

It carries out the reaction 2-C-methyl-D-erythritol 4-phosphate + CTP + H(+) = 4-CDP-2-C-methyl-D-erythritol + diphosphate. It participates in isoprenoid biosynthesis; isopentenyl diphosphate biosynthesis via DXP pathway; isopentenyl diphosphate from 1-deoxy-D-xylulose 5-phosphate: step 2/6. Its function is as follows. Catalyzes the formation of 4-diphosphocytidyl-2-C-methyl-D-erythritol from CTP and 2-C-methyl-D-erythritol 4-phosphate (MEP). In Thermotoga maritima (strain ATCC 43589 / DSM 3109 / JCM 10099 / NBRC 100826 / MSB8), this protein is 2-C-methyl-D-erythritol 4-phosphate cytidylyltransferase.